The primary structure comprises 104 residues: NADH-quinone oxidoreductase subunit K (104 aa).

A run of 3 helical transmembrane segments spans residues 4–24 (VPAS…LFGA), 31–51 (VIVL…FVAF), and 67–87 (LFTM…LIAL).

The protein belongs to the complex I subunit 4L family. NDH-1 is composed of 14 different subunits. Subunits NuoA, H, J, K, L, M, N constitute the membrane sector of the complex.

It is found in the cell membrane. It catalyses the reaction a quinone + NADH + 5 H(+)(in) = a quinol + NAD(+) + 4 H(+)(out). Functionally, NDH-1 shuttles electrons from NADH, via FMN and iron-sulfur (Fe-S) centers, to quinones in the respiratory chain. The immediate electron acceptor for the enzyme in this species is believed to be a menaquinone. Couples the redox reaction to proton translocation (for every two electrons transferred, four hydrogen ions are translocated across the cytoplasmic membrane), and thus conserves the redox energy in a proton gradient. The polypeptide is NADH-quinone oxidoreductase subunit K (Bacillus anthracis (strain A0248)).